The following is a 393-amino-acid chain: MNSKKRGDETLKVLHICRQFSPSVGGLEDSLLNLARSQRQRLGIDAEVLTLDTVFGRPGKLPHRDVVDGIPVTRLAWRGSTKYPLAPQVLRHIGGFDLLHVHAIDFFFDFLAWTWPLHRKTMIASTHGGFFHTGALRRIKEIWFRTITPISVRAYKKIVACSYSDADLFRHVAAGRLITIENGINQTRFRDAASRTPNRTILAFGRFAVHKRLKLLFQLVALLRAYNSGWNIIVAGQDSNLTADDLRAQARACGIEDSLRIVSGPSDAELRGLMGEASFFGCLSAHEGFGLAAVEAMSAGLVPILSNITPFARLMQQGAAGVMVNPDNLAPGAREAEDMAAALPETADALRARNMDVASRYDWHSVAHEYARLYQQVLGRALPEANMAAAGAE.

It belongs to the glycosyltransferase group 1 family. Glycosyltransferase 4 subfamily.

It catalyses the reaction beta-D-Glc-(1-&gt;4)-alpha-D-Glc-di-trans,octa-cis-undecaprenyl diphosphate + GDP-alpha-D-mannose = alpha-D-Man-(1-&gt;3)-beta-D-Glc-(1-&gt;4)-alpha-D-Glc-1-di-trans,octa-cis-undecaprenyl diphosphate + GDP + H(+). Functionally, involved in the biosynthesis of the exopolysaccharide acetan, a water-soluble polysaccharide involved in production of bacterial cellulose (BC). This is GDP-mannose:cellobiosyl-diphosphopolyprenol alpha-mannosyltransferase (aceC) from Komagataeibacter xylinus (Gluconacetobacter xylinus).